The chain runs to 448 residues: uncharacterized protein (448 aa).

Residues 187-198 show a composition bias toward basic and acidic residues; the sequence is SKGDRGDADDRG. Disordered stretches follow at residues 187–221, 243–270, and 291–361; these read SKGD…LPTR, LQVP…GATM, and LSGL…LPNG. The segment covering 243–261 has biased composition (low complexity); it reads LQVPGGTSAAIPSASSTPS. Residues 307–334 are compositionally biased toward basic and acidic residues; sequence FDERGQEVRDPADYEHSNEPDERRADDR.

It to M.tuberculosis Rv0025 and Rv0739.

This is an uncharacterized protein from Mycobacterium tuberculosis (strain ATCC 25618 / H37Rv).